We begin with the raw amino-acid sequence, 346 residues long: Cell division protein FtsZ 2 (346 aa).

GTP contacts are provided by residues 23-27 (GGGGN), 110-112 (GTG), glutamate 141, arginine 145, and aspartate 189. The interval 320–346 (SNRSAQPTAPEAMNGQTAAAVPSRTLQ) is disordered.

This sequence belongs to the FtsZ family. As to quaternary structure, homodimer. Polymerizes to form a dynamic ring structure in a strictly GTP-dependent manner. Interacts directly with several other division proteins.

The protein localises to the cytoplasm. Functionally, essential cell division protein that forms a contractile ring structure (Z ring) at the future cell division site. The regulation of the ring assembly controls the timing and the location of cell division. One of the functions of the FtsZ ring is to recruit other cell division proteins to the septum to produce a new cell wall between the dividing cells. Binds GTP and shows GTPase activity. The polypeptide is Cell division protein FtsZ 2 (Rhizobium meliloti (strain 1021) (Ensifer meliloti)).